The sequence spans 261 residues: Lys-63-specific deubiquitinase BRCC36 (261 aa).

One can recognise an MPN domain in the interval 6–149; sequence VHIQGDAFLV…YTCFQSVQAQ (144 aa). 3 residues coordinate Zn(2+): His-92, His-94, and Asp-105. A JAMM motif motif is present at residues 92–105; that stretch reads HSHPHITVWPSHVD.

This sequence belongs to the peptidase M67A family. BRCC36 subfamily. Component of the BRCA1-A complex, at least composed of brca1, bard1, uimc1/rap80, abraxas1, brcc3/brcc36, babam2 and babam1/nba1. In the BRCA1-A complex, interacts directly with ABRAXAS1 and babam2. Component of the BRISC complex, at least composed of ABRAXAS2, brcc3/brcc36, babam2 and babam1/nba1. Within the complex, interacts directly with abraxas2. Both the BRCA1-A complex and the BRISC complex bind polyubiquitin. Zn(2+) serves as cofactor.

Its subcellular location is the nucleus. The protein resides in the cytoplasm. It is found in the cytoskeleton. The protein localises to the spindle pole. Metalloprotease that specifically cleaves 'Lys-63'-linked polyubiquitin chains. Does not have activity toward 'Lys-48'-linked polyubiquitin chains. Component of the BRCA1-A complex, a complex that specifically recognizes 'Lys-63'-linked ubiquitinated histones H2A and H2AX at DNA lesions sites, leading to target the brca1-bard1 heterodimer to sites of DNA damage at double-strand breaks (DSBs). In the BRCA1-A complex, it specifically removes 'Lys-63'-linked ubiquitin on histones H2A and H2AX, antagonizing the rnf8-dependent ubiquitination at double-strand breaks (DSBs). Catalytic subunit of the BRISC complex, a multiprotein complex that specifically cleaves 'Lys-63'-linked ubiquitin in various substrates. Mediates the specific 'Lys-63'-specific deubiquitination associated with the COP9 signalosome complex (CSN), via the interaction of the BRISC complex with the CSN complex. The BRISC complex is required for normal mitotic spindle assembly and microtubule attachment to kinetochores via its role in deubiquitinating numa1. Plays a role in interferon signaling via its role in the deubiquitination of the interferon receptor ifnar1; deubiquitination increases ifnar1 activity by enhancing its stability and cell surface expression. Acts as a regulator of the NLRP3 inflammasome by mediating deubiquitination of nlrp3. Down-regulates the response to bacterial lipopolysaccharide (LPS) via its role in ifnar1 deubiquitination. This chain is Lys-63-specific deubiquitinase BRCC36 (brcc3), found in Xenopus laevis (African clawed frog).